We begin with the raw amino-acid sequence, 201 residues long: Adenylyl-sulfate kinase (201 aa).

35–42 (GLSGSGKS) lines the ATP pocket. S109 (phosphoserine intermediate) is an active-site residue.

The protein belongs to the APS kinase family.

It catalyses the reaction adenosine 5'-phosphosulfate + ATP = 3'-phosphoadenylyl sulfate + ADP + H(+). It participates in sulfur metabolism; hydrogen sulfide biosynthesis; sulfite from sulfate: step 2/3. Functionally, catalyzes the synthesis of activated sulfate. The protein is Adenylyl-sulfate kinase of Salmonella gallinarum (strain 287/91 / NCTC 13346).